The chain runs to 174 residues: Ferredoxin-thioredoxin reductase, variable chain, chloroplastic (174 aa).

Residues 1 to 62 constitute a chloroplast transit peptide; it reads MTTGVAVMSS…RTRARLAICC (62 aa). The span at 69 to 81 shows a compositional bias: low complexity; sequence DSSTGFDSSSSSP. The segment at 69-89 is disordered; sequence DSSTGFDSSSSSPPEEDEELK. 2 positions are modified to phosphoserine: S70 and S71.

It belongs to the ferredoxin thioredoxin reductase alpha subunit family. Heterodimer of subunit A (variable subunit) and subunit B (catalytic subunit). Heterodimeric FTR forms a complex with ferredoxin and thioredoxin.

It localises to the plastid. Its subcellular location is the chloroplast. Functionally, variable subunit of the ferredoxin-thioredoxin reductase (FTR), which catalyzes the two-electron reduction of thioredoxins by the electrons provided by reduced ferredoxin. The protein is Ferredoxin-thioredoxin reductase, variable chain, chloroplastic (FTRV) of Spinacia oleracea (Spinach).